A 298-amino-acid chain; its full sequence is UDP-N-acetylenolpyruvoylglucosamine reductase (298 aa).

Positions 26–190 constitute an FAD-binding PCMH-type domain; it reads RAGGPAERLY…VAAVLDLEPG (165 aa). R170 is an active-site residue. S219 (proton donor) is an active-site residue. The active site involves E289.

It belongs to the MurB family. The cofactor is FAD.

The protein resides in the cytoplasm. It catalyses the reaction UDP-N-acetyl-alpha-D-muramate + NADP(+) = UDP-N-acetyl-3-O-(1-carboxyvinyl)-alpha-D-glucosamine + NADPH + H(+). The protein operates within cell wall biogenesis; peptidoglycan biosynthesis. Functionally, cell wall formation. The sequence is that of UDP-N-acetylenolpyruvoylglucosamine reductase from Alkalilimnicola ehrlichii (strain ATCC BAA-1101 / DSM 17681 / MLHE-1).